Here is a 253-residue protein sequence, read N- to C-terminus: Small ribosomal subunit protein uS2 (253 aa).

The protein belongs to the universal ribosomal protein uS2 family.

The chain is Small ribosomal subunit protein uS2 from Chlorobium luteolum (strain DSM 273 / BCRC 81028 / 2530) (Pelodictyon luteolum).